The following is a 281-amino-acid chain: Probable endonuclease 4 (281 aa).

Zn(2+) is bound by residues histidine 78, histidine 118, glutamate 149, aspartate 181, histidine 184, histidine 216, aspartate 229, histidine 231, and glutamate 260.

The protein belongs to the AP endonuclease 2 family. It depends on Zn(2+) as a cofactor.

The catalysed reaction is Endonucleolytic cleavage to 5'-phosphooligonucleotide end-products.. Functionally, endonuclease IV plays a role in DNA repair. It cleaves phosphodiester bonds at apurinic or apyrimidinic (AP) sites, generating a 3'-hydroxyl group and a 5'-terminal sugar phosphate. The chain is Probable endonuclease 4 from Thermoplasma acidophilum (strain ATCC 25905 / DSM 1728 / JCM 9062 / NBRC 15155 / AMRC-C165).